We begin with the raw amino-acid sequence, 356 residues long: Histidinol-phosphate aminotransferase 2 (356 aa).

Lys-214 bears the N6-(pyridoxal phosphate)lysine mark.

Belongs to the class-II pyridoxal-phosphate-dependent aminotransferase family. Histidinol-phosphate aminotransferase subfamily. Homodimer. Pyridoxal 5'-phosphate serves as cofactor.

The catalysed reaction is L-histidinol phosphate + 2-oxoglutarate = 3-(imidazol-4-yl)-2-oxopropyl phosphate + L-glutamate. It functions in the pathway amino-acid biosynthesis; L-histidine biosynthesis; L-histidine from 5-phospho-alpha-D-ribose 1-diphosphate: step 7/9. The chain is Histidinol-phosphate aminotransferase 2 from Dechloromonas aromatica (strain RCB).